Reading from the N-terminus, the 152-residue chain is Small ribosomal subunit protein uS11 (152 aa).

The segment at 133 to 152 (VTPIPTDSTRRKSGHRGRRL) is disordered. Basic residues predominate over residues 143–152 (RKSGHRGRRL).

It belongs to the universal ribosomal protein uS11 family. In terms of assembly, component of the small ribosomal subunit. Part of the small subunit (SSU) processome, composed of more than 70 proteins and the RNA chaperone small nucleolar RNA (snoRNA) U3.

The protein resides in the cytoplasm. The protein localises to the nucleus. It is found in the nucleolus. Component of the small ribosomal subunit. The ribosome is a large ribonucleoprotein complex responsible for the synthesis of proteins in the cell. Part of the small subunit (SSU) processome, first precursor of the small eukaryotic ribosomal subunit. During the assembly of the SSU processome in the nucleolus, many ribosome biogenesis factors, an RNA chaperone and ribosomal proteins associate with the nascent pre-rRNA and work in concert to generate RNA folding, modifications, rearrangements and cleavage as well as targeted degradation of pre-ribosomal RNA by the RNA exosome. This is Small ribosomal subunit protein uS11 (rps14) from Dictyostelium discoideum (Social amoeba).